We begin with the raw amino-acid sequence, 528 residues long: Nucleolar GTP-binding protein 1 (528 aa).

Residues 168-335 form the OBG-type G domain; the sequence is RTLLVCGFPN…VKAMACDLLL (168 aa). GTP is bound by residues 174 to 181, 220 to 224, and 287 to 290; these read GFPNVGKS, DTPGI, and SKSD. The segment at 470–528 is disordered; the sequence is PDSWKHRSRNSGGDIAVHVRRDSKTQVAQPPRLPSKKKARFDDKHYYDRKPKHLYRGRK. Residues 509–518 show a composition bias toward basic and acidic residues; sequence RFDDKHYYDR. The segment covering 519–528 has biased composition (basic residues); sequence KPKHLYRGRK.

This sequence belongs to the TRAFAC class OBG-HflX-like GTPase superfamily. OBG GTPase family. NOG subfamily.

It is found in the nucleus. Its subcellular location is the nucleolus. Involved in the biogenesis of the 60S ribosomal subunit. The chain is Nucleolar GTP-binding protein 1 (NOG1) from Encephalitozoon cuniculi (strain GB-M1) (Microsporidian parasite).